Here is a 529-residue protein sequence, read N- to C-terminus: Tyrosine--tRNA ligase, cytoplasmic (529 aa).

Tyr39 is a binding site for L-tyrosine. The short motif at 44–52 is the 'HIGH' region element; sequence TTGKPHVAY. L-tyrosine is bound by residues Tyr166, Gln170, Asp173, and Gln188. The 'KMSKS' region motif lies at 222 to 226; it reads KMSSS. The short motif at 242–247 is the Nuclear localization signal element; it reads KKKLKK. A disordered region spans residues 335-362; the sequence is KLTSSAYPEPSKNKGGVKGNPKQTTDDD. A tRNA-binding domain is found at 365–469; it reads IPSRLDIRVG…EGSAAGDRVY (105 aa).

The protein belongs to the class-I aminoacyl-tRNA synthetase family. As to quaternary structure, homodimer.

It is found in the cytoplasm. It localises to the nucleus. The catalysed reaction is tRNA(Tyr) + L-tyrosine + ATP = L-tyrosyl-tRNA(Tyr) + AMP + diphosphate + H(+). Its function is as follows. Catalyzes the attachment of tyrosine to tRNA(Tyr) in a two-step reaction: tyrosine is first activated by ATP to form Tyr-AMP and then transferred to the acceptor end of tRNA(Tyr). This is Tyrosine--tRNA ligase, cytoplasmic (yars1) from Danio rerio (Zebrafish).